Here is a 138-residue protein sequence, read N- to C-terminus: uncharacterized protein (138 aa).

The next 3 helical transmembrane spans lie at 8–28 (LIIQ…AFLP), 47–67 (FIIC…TIIV), and 82–102 (TLPV…IAFI).

To U.parvum UU007, UU008 and UU041.

Its subcellular location is the cell membrane. This is an uncharacterized protein from Ureaplasma parvum serovar 3 (strain ATCC 700970).